The sequence spans 1057 residues: Glycine dehydrogenase (decarboxylating), mitochondrial (1057 aa).

Residues 1–86 (MERARRLANR…GVGYPSQSRS (86 aa)) constitute a mitochondrion transit peptide. The segment covering 18 to 27 (SEAKQNRKTE) has biased composition (basic and acidic residues). The segment at 18 to 47 (SEAKQNRKTESTSTTTTTPLPFSLSGSSSR) is disordered. Low complexity predominate over residues 28-47 (STSTTTTTPLPFSLSGSSSR). N6-(pyridoxal phosphate)lysine is present on Lys792.

This sequence belongs to the GcvP family. As to quaternary structure, homodimer. The glycine cleavage system is composed of four proteins: P, T, L and H. Pyridoxal 5'-phosphate serves as cofactor. As to expression, highly expressed in leaves. Detected in roots and embryos.

It localises to the mitochondrion. It catalyses the reaction N(6)-[(R)-lipoyl]-L-lysyl-[glycine-cleavage complex H protein] + glycine + H(+) = N(6)-[(R)-S(8)-aminomethyldihydrolipoyl]-L-lysyl-[glycine-cleavage complex H protein] + CO2. Its function is as follows. The glycine cleavage system catalyzes the degradation of glycine. The P protein binds the alpha-amino group of glycine through its pyridoxal phosphate cofactor; CO(2) is released and the remaining methylamine moiety is then transferred to the lipoamide cofactor of the H protein. This chain is Glycine dehydrogenase (decarboxylating), mitochondrial (GDCSP), found in Pisum sativum (Garden pea).